The chain runs to 978 residues: Macrophage colony-stimulating factor 1 receptor (978 aa).

The signal sequence occupies residues 1–19 (MELGPPLVLLLATVWHGQG). Over 20 to 515 (APVIEPSGPE…QLPDESLFTP (496 aa)) the chain is Extracellular. Ig-like C2-type domains follow at residues 24 to 104 (EPSG…VKDP), 107 to 197 (SWNL…KVNR), 204 to 298 (QIKL…VVES), 299 to 397 (AYLN…LTLR), and 398 to 503 (YPPE…SLGQ). Disulfide bonds link C42/C84, C127/C177, and C224/C278. Residues N45 and N73 are each glycosylated (N-linked (GlcNAc...) asparagine). N-linked (GlcNAc...) asparagine glycans are attached at residues N302, N335, N389, N410, N449, N478, and N491. Residues C417 and C483 are joined by a disulfide bond. Residues 516-536 (VVVACMSVMSLLVLLLLLLLY) traverse the membrane as a helical segment. The Cytoplasmic portion of the chain corresponds to 537 to 978 (KYKQKPKYQV…LQPNNYQFAC (442 aa)). The interval 540–572 (QKPKYQVRWKIIERYEGNSYTFIDPTQLPYNEK) is regulatory juxtamembrane domain. 2 positions are modified to phosphotyrosine; by autocatalysis: Y544 and Y559. One can recognise a Protein kinase domain in the interval 580 to 914 (LQFGKTLGAG…CFLLQEQARL (335 aa)). Residues 586-594 (LGAGAFGKV) and K614 each bind ATP. Residues Y697 and Y706 each carry the phosphotyrosine; by autocatalysis modification. Residue S711 is modified to Phosphoserine. Y721 is subject to Phosphotyrosine; by autocatalysis. Catalysis depends on D776, which acts as the Proton acceptor. Residues 794–816 (DFGLARDIMNDSNYVVKGNARLP) form an activation loop region. A phosphotyrosine; by autocatalysis mark is found at Y807 and Y921. The interval 921–957 (YANLPSSGGSSGSDSGGGSSGGSSSEPEEESSSEHLA) is disordered. Gly residues predominate over residues 929–941 (GSSGSDSGGGSSG). A Phosphotyrosine; by autocatalysis modification is found at Y974.

This sequence belongs to the protein kinase superfamily. Tyr protein kinase family. CSF-1/PDGF receptor subfamily. In terms of assembly, monomer. Homodimer. Interacts with CSF1 and IL34. Interaction with dimeric CSF1 or IL34 leads to receptor homodimerization. Interacts with INPPL1/SHIP2 and THOC5. Interacts (tyrosine phosphorylated) with PLCG2 (via SH2 domain). Interacts (tyrosine phosphorylated) with PIK3R1 (via SH2 domain). Interacts (tyrosine phosphorylated) with FYN, YES1 and SRC (via SH2 domain). Interacts (tyrosine phosphorylated) with CBL, GRB2 and SLA2. In terms of processing, autophosphorylated in response to CSF1 or IL34 binding. Phosphorylation at Tyr-559 is important for normal down-regulation of signaling by ubiquitination, internalization and degradation. Phosphorylation at Tyr-559 and Tyr-807 is important for interaction with SRC family members, including FYN, YES1 and SRC, and for subsequent activation of these protein kinases. Phosphorylation at Tyr-697 and Tyr-921 is important for interaction with GRB2. Phosphorylation at Tyr-721 is important for interaction with PIK3R1. Phosphorylation at Tyr-721 and Tyr-807 is important for interaction with PLCG2. Phosphorylation at Tyr-974 is important for interaction with CBL. Dephosphorylation by PTPN2 negatively regulates downstream signaling and macrophage differentiation. Post-translationally, ubiquitinated. Becomes rapidly polyubiquitinated after autophosphorylation, leading to its degradation.

The protein resides in the cell membrane. It carries out the reaction L-tyrosyl-[protein] + ATP = O-phospho-L-tyrosyl-[protein] + ADP + H(+). Its activity is regulated as follows. Present in an inactive conformation in the absence of bound ligand. CSF1 or IL34 binding leads to dimerization and activation by autophosphorylation on tyrosine residues. Its function is as follows. Tyrosine-protein kinase that acts as a cell-surface receptor for CSF1 and IL34 and plays an essential role in the regulation of survival, proliferation and differentiation of hematopoietic precursor cells, especially mononuclear phagocytes, such as macrophages and monocytes. Promotes the release of pro-inflammatory chemokines in response to IL34 and CSF1, and thereby plays an important role in innate immunity and in inflammatory processes. Plays an important role in the regulation of osteoclast proliferation and differentiation, the regulation of bone resorption, and is required for normal bone and tooth development. Required for normal male and female fertility, and for normal development of milk ducts and acinar structures in the mammary gland during pregnancy. Promotes reorganization of the actin cytoskeleton, regulates formation of membrane ruffles, cell adhesion and cell migration, and promotes cancer cell invasion. Activates several signaling pathways in response to ligand binding, including the ERK1/2 and the JNK pathway. Phosphorylates PIK3R1, PLCG2, GRB2, SLA2 and CBL. Activation of PLCG2 leads to the production of the cellular signaling molecules diacylglycerol and inositol 1,4,5-trisphosphate, that then lead to the activation of protein kinase C family members, especially PRKCD. Phosphorylation of PIK3R1, the regulatory subunit of phosphatidylinositol 3-kinase, leads to activation of the AKT1 signaling pathway. Activated CSF1R also mediates activation of the MAP kinases MAPK1/ERK2 and/or MAPK3/ERK1, and of the SRC family kinases SRC, FYN and YES1. Activated CSF1R transmits signals both via proteins that directly interact with phosphorylated tyrosine residues in its intracellular domain, or via adapter proteins, such as GRB2. Promotes activation of STAT family members STAT3, STAT5A and/or STAT5B. Promotes tyrosine phosphorylation of SHC1 and INPP5D/SHIP-1. Receptor signaling is down-regulated by protein phosphatases, such as INPP5D/SHIP-1, that dephosphorylate the receptor and its downstream effectors, and by rapid internalization of the activated receptor. In the central nervous system, may play a role in the development of microglia macrophages. In Rattus norvegicus (Rat), this protein is Macrophage colony-stimulating factor 1 receptor (Csf1r).